A 596-amino-acid chain; its full sequence is Leucine zipper putative tumor suppressor 1 (596 aa).

The N-myristoyl glycine moiety is linked to residue Gly-2. Disordered stretches follow at residues 136–193 (AILH…SYQL) and 295–324 (YEERPRRCRDELEGPEPKGGNKLKQASQKS). Over residues 153–162 (PPDKPKEQEL) the composition is skewed to basic and acidic residues. Residues 178 to 190 (SMSSLPTHSTSSS) show a composition bias toward low complexity. A coiled-coil region spans residues 256–374 (ISTDECSIQE…SYEREKTSFG (119 aa)). The segment covering 295–310 (YEERPRRCRDELEGPE) has biased composition (basic and acidic residues).

This sequence belongs to the LZTS family. Binds EEF1G, TLK2 and CDK1. Phosphorylated on serine residues. Hyperphosphorylated by the cAMP-dependent kinase PKA during cell-cycle progression. As to expression, highly expressed in testis, prostate, spleen, thymus, ovary and brain. Detected at lower levels in heart, placenta, small intestine, colon, liver, kidney, skeletal muscle and pancreas. Not detectable in primary tumors from breast and prostate and in many cancer cell lines.

The protein localises to the cytoplasm. Its subcellular location is the cell membrane. It localises to the cell projection. The protein resides in the dendritic spine. It is found in the postsynaptic density. The protein localises to the synapse. Its function is as follows. Involved in the regulation of cell growth. May stabilize the active CDC2-cyclin B1 complex and thereby contribute to the regulation of the cell cycle and the prevention of uncontrolled cell proliferation. May act as a tumor suppressor. This Homo sapiens (Human) protein is Leucine zipper putative tumor suppressor 1 (LZTS1).